Here is a 282-residue protein sequence, read N- to C-terminus: Virginiamycin B lyase (282 aa).

Substrate is bound at residue H217. E256 contacts Mg(2+). H258 acts as the Proton acceptor in catalysis. A Mg(2+)-binding site is contributed by E273.

The protein belongs to the Vgb family. As to quaternary structure, monomer. Requires Mg(2+) as cofactor.

Its function is as follows. Inactivates the type B streptogramin antibiotics by linearizing the lactone ring at the ester linkage, generating a free phenylglycine carboxylate and converting the threonyl moiety into 2-amino-butenoic acid. The protein is Virginiamycin B lyase of Mycolicibacterium smegmatis (strain ATCC 700084 / mc(2)155) (Mycobacterium smegmatis).